The following is a 1691-amino-acid chain: Protein TIC 214 (1691 aa).

Helical transmembrane passes span 19 to 39 (MLLGFYYGLLTTLPVGPSQIL), 60 to 80 (VLAQLITASSIYCSPIYLLLL), 84 to 104 (LLTIVAIPYTLLFCLVIKDFP), 123 to 143 (LFLISFFFQILNPIMLPNSVL), 158 to 178 (TVFMVSTFMGWLTGQAAFNFF), and 200 to 220 (FIYATFSIVSISYAVAYLGRA). Residues 819–839 (EKQHTLQRKHKEIGSKSRELK) are disordered.

The protein belongs to the TIC214 family. Part of the Tic complex.

The protein localises to the plastid. Its subcellular location is the chloroplast inner membrane. In terms of biological role, involved in protein precursor import into chloroplasts. May be part of an intermediate translocation complex acting as a protein-conducting channel at the inner envelope. In Adiantum capillus-veneris (Maidenhair fern), this protein is Protein TIC 214.